An 88-amino-acid chain; its full sequence is MANSKSAKKRALQSEKRRQHNASRRSMLRTYVKKVIAAIKAGDHKTATEAFAVAQPIVDRMATKGLIHKNKAARQKARLNAKIKAIAA.

Residues 1–27 (MANSKSAKKRALQSEKRRQHNASRRSM) are disordered.

It belongs to the bacterial ribosomal protein bS20 family.

Its function is as follows. Binds directly to 16S ribosomal RNA. The chain is Small ribosomal subunit protein bS20 from Shewanella putrefaciens (strain CN-32 / ATCC BAA-453).